Here is a 204-residue protein sequence, read N- to C-terminus: Molybdenum cofactor guanylyltransferase (204 aa).

Residues 12-14 (LAG), Lys-25, Asn-53, Asp-71, and Asp-101 each bind GTP. A Mg(2+)-binding site is contributed by Asp-101.

The protein belongs to the MobA family. In terms of assembly, monomer. Mg(2+) serves as cofactor.

It is found in the cytoplasm. The catalysed reaction is Mo-molybdopterin + GTP + H(+) = Mo-molybdopterin guanine dinucleotide + diphosphate. Transfers a GMP moiety from GTP to Mo-molybdopterin (Mo-MPT) cofactor (Moco or molybdenum cofactor) to form Mo-molybdopterin guanine dinucleotide (Mo-MGD) cofactor. This chain is Molybdenum cofactor guanylyltransferase, found in Ralstonia pickettii (strain 12J).